Consider the following 380-residue polypeptide: Crotonobetainyl-CoA reductase (380 aa).

The protein belongs to the acyl-CoA dehydrogenase family. As to quaternary structure, homotetramer. Requires FAD as cofactor.

It is found in the cytoplasm. It catalyses the reaction 4-(trimethylamino)butanoyl-CoA + oxidized [electron-transfer flavoprotein] + H(+) = crotonobetainyl-CoA + reduced [electron-transfer flavoprotein]. Its pathway is amine and polyamine metabolism; carnitine metabolism. Catalyzes the reduction of crotonobetainyl-CoA to gamma-butyrobetainyl-CoA. This is Crotonobetainyl-CoA reductase from Escherichia coli (strain UTI89 / UPEC).